The chain runs to 332 residues: DNA-directed RNA polymerase subunit alpha (332 aa).

The tract at residues 2–234 is alpha N-terminal domain (alpha-NTD); sequence TVTANQVLRP…DQLSVFGDFT (233 aa). The tract at residues 248 to 332 is alpha C-terminal domain (alpha-CTD); it reads VDPVLLRPID…AGVAQHGMLG (85 aa).

This sequence belongs to the RNA polymerase alpha chain family. Homodimer. The RNAP catalytic core consists of 2 alpha, 1 beta, 1 beta' and 1 omega subunit. When a sigma factor is associated with the core the holoenzyme is formed, which can initiate transcription.

It carries out the reaction RNA(n) + a ribonucleoside 5'-triphosphate = RNA(n+1) + diphosphate. Functionally, DNA-dependent RNA polymerase catalyzes the transcription of DNA into RNA using the four ribonucleoside triphosphates as substrates. The chain is DNA-directed RNA polymerase subunit alpha from Xanthomonas axonopodis pv. citri (strain 306).